The chain runs to 514 residues: MTTTKRPIALLILDGWGYRENTHMNAIYHANTPVLDRLNAQYAHGLISGSGLDVGLPDGQMGNSEVGHINLGSGRIVYQELTRISKAIADHEFEQNPALCDAVDAAVKAGGAVHIMGLLSPGGVHSHEEHIEAMCRMAVARGATKVYLHAFLDGRDTPPRSAKGSLSHFDDLFTTLGHGRIASIIGRYFAMDRDNRWDRVSQAYDLITQGKAKFQYDNAVTALEAAYERNENDEFVSSSAITDSEGKVASLNDGDALIFMNFRADRARQITRSFINADFDGFERAVTPKVNFVTLTEYAADIKAPIAYPSENLVNTLGEVLQNRGRTQLRISETEKYAHVTFFFNGGKEEPFNGEDRILINSPKVATYDLQPEMSSTELTDKLVAAIESAQYDVIICNYPNGDMVGHTGNFDAAVKACEAVDACIGRVVDALAKVGGECIITADHGNAEQMTDETTGQAHTAHTSELVPFVFVGRDATIDEGGKLSDVAPTILHLMGETIPAEMTGKPLIHVKE.

Mn(2+)-binding residues include Asp-14 and Ser-64. Ser-64 serves as the catalytic Phosphoserine intermediate. Substrate-binding positions include His-125, Arg-155–Asp-156, Arg-187, Arg-193, Arg-263–Arg-266, and Lys-336. Positions 403, 407, 444, 445, and 463 each coordinate Mn(2+).

Belongs to the BPG-independent phosphoglycerate mutase family. In terms of assembly, monomer. Mn(2+) is required as a cofactor.

It catalyses the reaction (2R)-2-phosphoglycerate = (2R)-3-phosphoglycerate. It participates in carbohydrate degradation; glycolysis; pyruvate from D-glyceraldehyde 3-phosphate: step 3/5. Catalyzes the interconversion of 2-phosphoglycerate and 3-phosphoglycerate. The sequence is that of 2,3-bisphosphoglycerate-independent phosphoglycerate mutase from Shewanella sp. (strain MR-7).